The primary structure comprises 457 residues: tRNA modification GTPase MnmE (457 aa).

(6S)-5-formyl-5,6,7,8-tetrahydrofolate is bound by residues Arg-24, Glu-81, and Lys-124. In terms of domain architecture, TrmE-type G spans 220 to 379; that stretch reads GIQLVLAGAP…LKQKILHVVG (160 aa). Asn-230 provides a ligand contact to K(+). GTP is bound by residues 230–235, 249–255, and 274–277; these read NVGKSS, TPIAGTT, and DTAG. Position 234 (Ser-234) interacts with Mg(2+). K(+) contacts are provided by Thr-249, Ile-251, and Thr-254. Thr-255 is a Mg(2+) binding site. A (6S)-5-formyl-5,6,7,8-tetrahydrofolate-binding site is contributed by Lys-457.

Belongs to the TRAFAC class TrmE-Era-EngA-EngB-Septin-like GTPase superfamily. TrmE GTPase family. As to quaternary structure, homodimer. Heterotetramer of two MnmE and two MnmG subunits. The cofactor is K(+).

It localises to the cytoplasm. Its function is as follows. Exhibits a very high intrinsic GTPase hydrolysis rate. Involved in the addition of a carboxymethylaminomethyl (cmnm) group at the wobble position (U34) of certain tRNAs, forming tRNA-cmnm(5)s(2)U34. The protein is tRNA modification GTPase MnmE of Polynucleobacter asymbioticus (strain DSM 18221 / CIP 109841 / QLW-P1DMWA-1) (Polynucleobacter necessarius subsp. asymbioticus).